The sequence spans 637 residues: Threonine--tRNA ligase (637 aa).

The region spanning 1–61 is the TGS domain; it reads MPVITLPNGS…EQDAALSIVT (61 aa). A catalytic region spans residues 242-533; sequence DHRKLGKKFD…LIENYEGAFP (292 aa). Positions 333, 384, and 510 each coordinate Zn(2+).

It belongs to the class-II aminoacyl-tRNA synthetase family. Homodimer. Zn(2+) serves as cofactor.

It is found in the cytoplasm. It carries out the reaction tRNA(Thr) + L-threonine + ATP = L-threonyl-tRNA(Thr) + AMP + diphosphate + H(+). In terms of biological role, catalyzes the attachment of threonine to tRNA(Thr) in a two-step reaction: L-threonine is first activated by ATP to form Thr-AMP and then transferred to the acceptor end of tRNA(Thr). Also edits incorrectly charged L-seryl-tRNA(Thr). This is Threonine--tRNA ligase from Teredinibacter turnerae (strain ATCC 39867 / T7901).